We begin with the raw amino-acid sequence, 75 residues long: Protein BRICK1 (75 aa).

Ala-2 is subject to N-acetylalanine. The stretch at 41 to 72 (MSCRSRLATLNEKLTALERRIEYIEARVTKGE) forms a coiled coil.

This sequence belongs to the BRK1 family. As to quaternary structure, homotrimer when in free form. Directly interacts with WASF2. Component of the WAVE1 complex composed of ABI2, CYFIP1 or CYFIP2, BRK1, NCKAP1 and WASF1/WAVE1. Within the complex, a heterodimer containing NCKAP1 and CYFIP1 interacts with a heterotrimer formed by WAVE1, ABI2 and BRK1.

The protein localises to the cytoplasm. The protein resides in the cytoskeleton. Its function is as follows. Involved in regulation of actin and microtubule organization. Part of a WAVE complex that activates the Arp2/3 complex. As component of the WAVE1 complex, required for BDNF-NTRK2 endocytic trafficking and signaling from early endosomes. This chain is Protein BRICK1 (BRK1), found in Homo sapiens (Human).